The sequence spans 96 residues: Small ribosomal subunit protein bS6 (96 aa).

This sequence belongs to the bacterial ribosomal protein bS6 family.

Binds together with bS18 to 16S ribosomal RNA. This Streptococcus sanguinis (strain SK36) protein is Small ribosomal subunit protein bS6.